The following is a 156-amino-acid chain: Protein Smg homolog (156 aa).

Belongs to the Smg family.

The protein is Protein Smg homolog of Halorhodospira halophila (strain DSM 244 / SL1) (Ectothiorhodospira halophila (strain DSM 244 / SL1)).